A 569-amino-acid polypeptide reads, in one-letter code: Arginine--tRNA ligase (569 aa).

The 'HIGH' region signature appears at 123–133 (ANPNGPLHVGH).

It belongs to the class-I aminoacyl-tRNA synthetase family.

The protein localises to the cytoplasm. It carries out the reaction tRNA(Arg) + L-arginine + ATP = L-arginyl-tRNA(Arg) + AMP + diphosphate. This Methanosarcina barkeri (strain Fusaro / DSM 804) protein is Arginine--tRNA ligase.